Here is a 140-residue protein sequence, read N- to C-terminus: Flagellar assembly factor FliW (140 aa).

Belongs to the FliW family. In terms of assembly, interacts with translational regulator CsrA and flagellin(s).

Its subcellular location is the cytoplasm. In terms of biological role, acts as an anti-CsrA protein, binds CsrA and prevents it from repressing translation of its target genes, one of which is flagellin. Binds to flagellin and participates in the assembly of the flagellum. This chain is Flagellar assembly factor FliW, found in Syntrophotalea carbinolica (strain DSM 2380 / NBRC 103641 / GraBd1) (Pelobacter carbinolicus).